The following is a 958-amino-acid chain: Isoleucine--tRNA ligase (958 aa).

The tract at residues M1–G32 is disordered. The 'HIGH' region signature appears at P71–H81. Residue E590 participates in L-isoleucyl-5'-AMP binding. The 'KMSKS' region signature appears at K631–S635. K634 provides a ligand contact to ATP. Zn(2+) is bound by residues C921, C924, C941, and C944.

This sequence belongs to the class-I aminoacyl-tRNA synthetase family. IleS type 1 subfamily. As to quaternary structure, monomer. It depends on Zn(2+) as a cofactor.

It is found in the cytoplasm. It carries out the reaction tRNA(Ile) + L-isoleucine + ATP = L-isoleucyl-tRNA(Ile) + AMP + diphosphate. Catalyzes the attachment of isoleucine to tRNA(Ile). As IleRS can inadvertently accommodate and process structurally similar amino acids such as valine, to avoid such errors it has two additional distinct tRNA(Ile)-dependent editing activities. One activity is designated as 'pretransfer' editing and involves the hydrolysis of activated Val-AMP. The other activity is designated 'posttransfer' editing and involves deacylation of mischarged Val-tRNA(Ile). The chain is Isoleucine--tRNA ligase from Janthinobacterium sp. (strain Marseille) (Minibacterium massiliensis).